Here is a 479-residue protein sequence, read N- to C-terminus: Glutamate--tRNA ligase (479 aa).

Residues 11–21 (PSPTGYLHIGG) carry the 'HIGH' region motif. Zn(2+) is bound by residues Cys-108, Cys-110, Cys-135, and Glu-137. The short motif at 250–254 (KLSKR) is the 'KMSKS' region element. An ATP-binding site is contributed by Lys-253.

This sequence belongs to the class-I aminoacyl-tRNA synthetase family. Glutamate--tRNA ligase type 1 subfamily. In terms of assembly, monomer. Zn(2+) is required as a cofactor.

It is found in the cytoplasm. It catalyses the reaction tRNA(Glu) + L-glutamate + ATP = L-glutamyl-tRNA(Glu) + AMP + diphosphate. Catalyzes the attachment of glutamate to tRNA(Glu) in a two-step reaction: glutamate is first activated by ATP to form Glu-AMP and then transferred to the acceptor end of tRNA(Glu). The chain is Glutamate--tRNA ligase from Myxococcus xanthus (strain DK1622).